The primary structure comprises 319 residues: Large ribosomal subunit protein uL10 (319 aa).

Over residues Ala286–Ala295 the composition is skewed to low complexity. The segment at Ala286 to Asp319 is disordered.

The protein belongs to the universal ribosomal protein uL10 family. As to quaternary structure, P0 forms a pentameric complex by interaction with dimers of P1 and P2. Interacts with NSF. Phosphorylated. As to expression, highly expressed in stems, inflorescences and immature seeds (at protein level). Expressed in leaves and mature seeds (at protein level).

Ribosomal protein P0 is the functional equivalent of E.coli protein L10. The chain is Large ribosomal subunit protein uL10 from Oryza sativa subsp. japonica (Rice).